The following is a 457-amino-acid chain: MALWGGRFTQAADKRFKDFNDSLRFDYRLAEQDIEGSIGWSKALVSVGVLTVQEQQQLESALNTLLIEVRSNPQAILQDDAEDIHSWVESKLIDKVGNLGKKLHTGRSRNDQVALDIKMWCKQRVIELQSSLHALQCKLVETAENNQHAVMPGYTHLQRAQPITFAHWCMAYVEMLDRDYSRLTDAYQRMNSCPLGSGALAGTAYAIDREQLALDLGFDVATRNSLDSVSDRDHIVELLSTASLSMAHLSRFAEDMIIFNSGESNFVELSDRVTSGSSLMPQKKNPDACELIRGKAGRVMGALTGMLMTLKGLPLAYNKDMQEDKEGIFDALDTWQDCIDMAALVLDGIQVNVERTKEAALKGYSNATELADYLVAKGVPFRDSHHIVGETVVYAIQQHKALEALSVAEFKQFSDVVEEDVYQILSLQSCLDKRCAKGGVSPLRVAEAIAEAKARLS.

It belongs to the lyase 1 family. Argininosuccinate lyase subfamily.

Its subcellular location is the cytoplasm. The enzyme catalyses 2-(N(omega)-L-arginino)succinate = fumarate + L-arginine. The protein operates within amino-acid biosynthesis; L-arginine biosynthesis; L-arginine from L-ornithine and carbamoyl phosphate: step 3/3. The sequence is that of Argininosuccinate lyase from Pasteurella multocida (strain Pm70).